The chain runs to 307 residues: Coenzyme PQQ synthesis protein B (307 aa).

It belongs to the PqqB family.

It functions in the pathway cofactor biosynthesis; pyrroloquinoline quinone biosynthesis. In terms of biological role, may be involved in the transport of PQQ or its precursor to the periplasm. This is Coenzyme PQQ synthesis protein B from Gluconacetobacter diazotrophicus (strain ATCC 49037 / DSM 5601 / CCUG 37298 / CIP 103539 / LMG 7603 / PAl5).